The primary structure comprises 301 residues: Ornithine carbamoyltransferase (301 aa).

Residues Arg-100 and 127-130 (HPCQ) each bind carbamoyl phosphate. L-ornithine-binding positions include Asn-158, Asp-221, and 225 to 226 (SM). Residues Cys-260 and Arg-288 each coordinate carbamoyl phosphate.

The protein belongs to the aspartate/ornithine carbamoyltransferase superfamily. OTCase family. In terms of assembly, homododecamer.

The protein localises to the cytoplasm. It carries out the reaction carbamoyl phosphate + L-ornithine = L-citrulline + phosphate + H(+). The protein operates within amino-acid biosynthesis; L-arginine biosynthesis; L-arginine from L-ornithine and carbamoyl phosphate: step 1/3. Reversibly catalyzes the transfer of the carbamoyl group from carbamoyl phosphate (CP) to the N(epsilon) atom of ornithine (ORN) to produce L-citrulline. The chain is Ornithine carbamoyltransferase (argF) from Moritella profunda.